A 451-amino-acid chain; its full sequence is Probable phosphoglucosamine mutase (451 aa).

Serine 96 serves as the catalytic Phosphoserine intermediate. Residues serine 96, aspartate 233, aspartate 235, and aspartate 237 each contribute to the Mg(2+) site. Position 96 is a phosphoserine (serine 96).

The protein belongs to the phosphohexose mutase family. The cofactor is Mg(2+). Post-translationally, activated by phosphorylation.

The catalysed reaction is alpha-D-glucosamine 1-phosphate = D-glucosamine 6-phosphate. Functionally, catalyzes the conversion of glucosamine-6-phosphate to glucosamine-1-phosphate. The protein is Probable phosphoglucosamine mutase of Pyrococcus abyssi (strain GE5 / Orsay).